The chain runs to 600 residues: MTKENLENELKTLPNSAGVYQYFNQEGKLLYVGKAKNLKNRVKSYFAFTPNLHANPRNSLRIQKMIEETVHLEFITTNSEADALILENSFIKQLHPKYNILLRDDKTYPYIYVNFEEEFPRFEITRKLVKKSKIKYFGPFFKGARELLDALYLYYPLKQKASCKSPCIFYQISRCLAPCDKRISKEKYLEILDEAMHALLNPSILIKNLEKQMLVLAQNENYEEAAKVRDQIVTIKDLEVKVEMDVAKLEDFEVFALAFEDSMLSTLRFVVQNGKIISANSKITPIKNDIQWDQNEIYKQLILENFSMDIPLLANVIYVYEEFEDRVLLEEILSQRFDKKISIKIPKIGEKRRICDLAFQNALLNIEKEQKNHDFTIQKELKFYFELENLPNDIEIFDNSHLQGVANVGAMVTYRINSWDKSKYRKFHLKHKNDYDQMREVLTRRALDFDKIPPPDLWLIDGGKVLLDLAKKIIVSSGANVDILAISKEKIDAKAHRAKGGAKDKIHSLKGEFSLSINDKKLQFLQKLRDEAHRFAISFHQNTKKKQDLKSSKLANLGLSSGVIQKLLAYYGNFESIYKADFKDLTMLVGRKAAQKIKEN.

One can recognise a GIY-YIG domain in the interval 15-100; sequence NSAGVYQYFN…IKQLHPKYNI (86 aa). The UVR domain maps to 203 to 238; sequence SILIKNLEKQMLVLAQNENYEEAAKVRDQIVTIKDL.

This sequence belongs to the UvrC family. As to quaternary structure, interacts with UvrB in an incision complex.

It is found in the cytoplasm. Its function is as follows. The UvrABC repair system catalyzes the recognition and processing of DNA lesions. UvrC both incises the 5' and 3' sides of the lesion. The N-terminal half is responsible for the 3' incision and the C-terminal half is responsible for the 5' incision. This chain is UvrABC system protein C, found in Campylobacter jejuni subsp. jejuni serotype O:23/36 (strain 81-176).